A 226-amino-acid chain; its full sequence is Large ribosomal subunit protein uL1 (226 aa).

This sequence belongs to the universal ribosomal protein uL1 family. As to quaternary structure, part of the 50S ribosomal subunit.

Binds directly to 23S rRNA. The L1 stalk is quite mobile in the ribosome, and is involved in E site tRNA release. Its function is as follows. Protein L1 is also a translational repressor protein, it controls the translation of the L11 operon by binding to its mRNA. In Buchnera aphidicola subsp. Cinara cedri (strain Cc), this protein is Large ribosomal subunit protein uL1.